The chain runs to 703 residues: uncharacterized protein (703 aa).

Residues 1–23 form the signal peptide; the sequence is MKQIMIFLTSFMLLAMTGQTALA. A helical membrane pass occupies residues 673–693; that stretch reads MYIGVLALIMVVAAVFIWIAV.

The protein resides in the cell membrane. This is an uncharacterized protein from Bacillus subtilis (strain 168).